Consider the following 404-residue polypeptide: ORC1-type DNA replication protein 2 (404 aa).

ATP-binding positions include 64 to 68, Tyr-205, and Arg-217; that span reads TGKTS.

The protein belongs to the CDC6/cdc18 family. As to quaternary structure, interacts with MCM.

In terms of biological role, involved in regulation of DNA replication. Stimulates the helicase activity of MCM via stimulation of its ATPase activity. Binding to MCM may result in conformational changes in MCM, leading to catalytic ATP hydrolysis by the helicase. Directly stimulates MCM movement along single-stranded and double-stranded DNA. Does not bind DNA. This is ORC1-type DNA replication protein 2 (cdc6-2) from Thermoplasma acidophilum (strain ATCC 25905 / DSM 1728 / JCM 9062 / NBRC 15155 / AMRC-C165).